A 333-amino-acid polypeptide reads, in one-letter code: Fructose-1,6-bisphosphatase class 1 1 (333 aa).

Mg(2+) contacts are provided by glutamate 81, aspartate 100, leucine 102, and aspartate 103. Substrate is bound by residues 103 to 106 (DGSS) and asparagine 191. Mg(2+) is bound at residue glutamate 263.

Belongs to the FBPase class 1 family. As to quaternary structure, homotetramer. The cofactor is Mg(2+).

The protein resides in the cytoplasm. It catalyses the reaction beta-D-fructose 1,6-bisphosphate + H2O = beta-D-fructose 6-phosphate + phosphate. Its pathway is carbohydrate biosynthesis; Calvin cycle. The sequence is that of Fructose-1,6-bisphosphatase class 1 1 from Cereibacter sphaeroides (strain ATCC 17025 / ATH 2.4.3) (Rhodobacter sphaeroides).